The primary structure comprises 137 residues: KYDERTESVHEVNETDYEQCNTVGKEHVLFNDGNTKVMLTKSGFRHFISGNQSHCQMGLKLMVVVMSNNTKKKLIHSPSPSSPSPSPSPSPSPSPSPSPSLSSPSPSPLPNNQGVTRSSGAEFIGVMMWLGVMMLLL.

The region spanning 1–67 (KYDERTESVH…GLKLMVVVMS (67 aa)) is the Phytocyanin domain. 3 N-linked (GlcNAc...) asparagine glycosylation sites follow: Asn13, Asn51, and Asn68. The cysteines at positions 20 and 55 are disulfide-linked. A disordered region spans residues 70–115 (TKKKLIHSPSPSSPSPSPSPSPSPSPSPSPSLSSPSPSPLPNNQGV). Pro residues predominate over residues 80-98 (PSSPSPSPSPSPSPSPSPS).

It belongs to the early nodulin-like (ENODL) family.

It localises to the symbiosome. The protein resides in the peribacteroid membrane. In terms of biological role, may act as a carbohydrate transporter. This Glycine max (Soybean) protein is Early nodulin-55-1.